The chain runs to 1912 residues: Methylcytosine dioxygenase TET2 (1912 aa).

Over residues 1–11 (MEQDRTTHAEG) the composition is skewed to basic and acidic residues. Residues 1–86 (MEQDRTTHAE…PHEDRGYSRC (86 aa)) form a disordered region. Ser15 and Ser23 each carry phosphoserine. Positions 53 to 74 (TKWQSSQSCYGISHMKGSQSSH) are enriched in polar residues. Phosphoserine is present on residues Ser76 and Ser97. Disordered regions lie at residues 112–166 (LDQK…FPTR), 340–359 (DRNLQASHGSSEQYSKQKET), 367–388 (SSKFPKDSISPTTVTPPSQSLL), 429–470 (IDHQ…PEKS), 673–723 (PQTQ…DKQR), 832–862 (EQAQKPQQASSLQGLKDRSQGESPAPPAEAA), 907–966 (QEQQ…NGQP), and 1009–1052 (ESEN…EGCN). 5 stretches are compositionally biased toward polar residues: residues 135 to 158 (SRQPNVSGLSDNGEPVTSTTQESS), 340 to 353 (DRNLQASHGSSEQY), 367 to 387 (SSKFPKDSISPTTVTPPSQSL), 434 to 447 (KTSSSQSLNPSVHT), and 673 to 689 (PQTQASQTPASQNSNFP). The span at 690–701 (QICQQQQQQQLQ) shows a compositional bias: low complexity. Polar residues-rich tracts occupy residues 707 to 719 (QMPQTFSHLQGSN) and 832 to 844 (EQAQKPQQASSLQ). A compositionally biased stretch (low complexity) spans 907–921 (QEQQQTQQSQPGHNQ). Composition is skewed to polar residues over residues 944 to 966 (PQENMSSRIKQEISSPSRDNGQP) and 1036 to 1046 (SDTPGEQSQNG). Ser1036 bears the Phosphoserine mark. Zn(2+) contacts are provided by Cys1048, Cys1106, His1132, and Cys1134. Residue Arg1174 coordinates 2-oxoglutarate. Residues Cys1184, Cys1186, Cys1202, and Cys1211 each coordinate Zn(2+). The tract at residues 1203 to 1216 (SWSMYYNGCKFARS) is interaction with DNA. Residue Lys1212 forms a Glycyl lysine isopeptide (Lys-Gly) (interchain with G-Cter in ubiquitin) linkage. Cys1271 contacts Zn(2+). Cys1287 contributes to the 2-oxoglutarate binding site. His1293 lines the Zn(2+) pocket. Residues His1295 and Asp1297 each contribute to the Fe cation site. Position 1300 (Asn1300) interacts with substrate. His1329 provides a ligand contact to 2-oxoglutarate. 2 disordered regions span residues 1379 to 1414 (KKKAEPKKAKTKKAARKRSSLENCSSRTEKGKSSSH) and 1444 to 1514 (LQRH…HTSD). Basic residues predominate over residues 1387–1396 (AKTKKAARKR). Positions 1456-1473 (QPQPPQPQPQTTPQPQPQ) are enriched in pro residues. The segment covering 1480 to 1512 (GNSQSVGSHCSGSTSVYTRQPTPHSPYPSSAHT) has biased composition (polar residues). Fe cation is bound at residue His1795. 2-oxoglutarate is bound at residue 1810 to 1812 (RIS). 1816–1818 (YRH) is a substrate binding site. His1826 lines the Zn(2+) pocket. The span at 1842-1866 (EEECGKNGSDHVSQKNHGKQEKREP) shows a compositional bias: basic and acidic residues. The disordered stretch occupies residues 1842–1871 (EEECGKNGSDHVSQKNHGKQEKREPTGPQE).

Belongs to the TET family. In terms of assembly, interacts with HCFC1. Interacts with OGT. Interacts with PROSER1; this interaction mediates TET2 O-GlcNAcylation and stability by promoting the interaction between OGT and TET2. Directly interacts (via C-terminus) with the DCAF1 component of the CRL4(VprBP) E3 ubiquitin-protein ligase complex. Requires Fe(2+) as cofactor. The cofactor is Zn(2+). In terms of processing, may be glycosylated. It is unclear whether interaction with OGT leads to GlcNAcylation. According to a report, it is GlcNAcylated by OGT. In contrast, another group reports no GlcNAcylation by OGT in human ortholog. Monoubiquitinated at Lys-1212 by the DCX (DDB1-CUL4-X-box) E3 ubiquitin-protein ligase complex called CRL4(VprBP) or CUL4A-RBX1-DDB1-DCAF1/VPRBP complex; this modification promotes binding to DNA. Post-translationally, acetylated. As to expression, expressed in the brain, kidney, heart, lung, muscle and stomach. Expressed in germinal vesicle (GV) stage and MII-stage oocytes and in early embryos. Present in embryonic stem cells (ES cells).

The protein localises to the nucleus. It localises to the chromosome. The catalysed reaction is a 5-methyl-2'-deoxycytidine in DNA + 2-oxoglutarate + O2 = a 5-hydroxymethyl-2'-deoxycytidine in DNA + succinate + CO2. The enzyme catalyses a 5-hydroxymethyl-2'-deoxycytidine in DNA + 2-oxoglutarate + O2 = a 5-formyl-2'-deoxycytidine in DNA + succinate + CO2 + H2O. It catalyses the reaction a 5-formyl-2'-deoxycytidine in DNA + 2-oxoglutarate + O2 = a 5-carboxyl-2'-deoxycytidine in DNA + succinate + CO2 + H(+). Functionally, dioxygenase that catalyzes the conversion of the modified genomic base 5-methylcytosine (5mC) into 5-hydroxymethylcytosine (5hmC) and plays a key role in active DNA demethylation. Has a preference for 5-hydroxymethylcytosine in CpG motifs. Also mediates subsequent conversion of 5hmC into 5-formylcytosine (5fC), and conversion of 5fC to 5-carboxylcytosine (5caC). Conversion of 5mC into 5hmC, 5fC and 5caC probably constitutes the first step in cytosine demethylation. Methylation at the C5 position of cytosine bases is an epigenetic modification of the mammalian genome which plays an important role in transcriptional regulation. In addition to its role in DNA demethylation, also involved in the recruitment of the O-GlcNAc transferase OGT to CpG-rich transcription start sites of active genes, thereby promoting histone H2B GlcNAcylation by OGT. The chain is Methylcytosine dioxygenase TET2 (Tet2) from Mus musculus (Mouse).